Reading from the N-terminus, the 393-residue chain is MVTIGTPNTPSATRILLLGSGELGREVAIEAMRLGVEVIAVDRYPNAPAMQVAHRSHVVSMLDGAALRRIIEAERPHCIVPEIEAIATETLLELEKEGFRVVPTARAARLTMDREGIRRLAAEELGLPTSPYRFAETEAEYREAVAAVGLPCVVKPVMSSSGKGQSTVRTEADVMKAWEYAQTGGRAGGGKVIVEGFVDFDYEITQLTVRHAGGTTFCDPIGHLQKDGDYRESWQPHPMSQAALAESRRMAEAVTGALGGWGIFGVELFIKGDKVYFSEVSPRPHDTGLVTLISQNLSEFALHARAILGLPVPALRQNGPAASCVVLAEGDSMSPGYHGIEAALAEPDTGLCLFGKPEVHGKRRMGVALALGASIEEARAKARRAAAAVQVEL.

N(1)-(5-phospho-beta-D-ribosyl)glycinamide-binding positions include 22–23 and E82; that span reads EL. ATP contacts are provided by residues R114, K155, 160 to 165, 195 to 198, and E203; these read SSGKGQ and EGFV. One can recognise an ATP-grasp domain in the interval 119–308; that stretch reads RLAAEELGLP…EFALHARAIL (190 aa). Mg(2+) is bound by residues E267 and E279. N(1)-(5-phospho-beta-D-ribosyl)glycinamide contacts are provided by residues D286, K356, and 363–364; that span reads RR.

This sequence belongs to the PurK/PurT family. Homodimer.

It carries out the reaction N(1)-(5-phospho-beta-D-ribosyl)glycinamide + formate + ATP = N(2)-formyl-N(1)-(5-phospho-beta-D-ribosyl)glycinamide + ADP + phosphate + H(+). It functions in the pathway purine metabolism; IMP biosynthesis via de novo pathway; N(2)-formyl-N(1)-(5-phospho-D-ribosyl)glycinamide from N(1)-(5-phospho-D-ribosyl)glycinamide (formate route): step 1/1. In terms of biological role, involved in the de novo purine biosynthesis. Catalyzes the transfer of formate to 5-phospho-ribosyl-glycinamide (GAR), producing 5-phospho-ribosyl-N-formylglycinamide (FGAR). Formate is provided by PurU via hydrolysis of 10-formyl-tetrahydrofolate. The polypeptide is Formate-dependent phosphoribosylglycinamide formyltransferase (Nitratidesulfovibrio vulgaris (strain DSM 19637 / Miyazaki F) (Desulfovibrio vulgaris)).